The following is a 159-amino-acid chain: MQQGWLSNWLVKHEVVHRSLGFDHRGIETLQIKAEDWDSIAVILYVYGYNYLRSQCAYDVAPGGSLASVYHLTRIQYGIDNPEEVCIKVFAQKDNPRIPSVFWIWRSSDFQERESFDMVGISYDNHPRLKRILMPESWIGWPLRKDYITPNFYEIQDAH.

It belongs to the complex I 30 kDa subunit family. In terms of assembly, NDH is composed of at least 16 different subunits, 5 of which are encoded in the nucleus.

It localises to the plastid. It is found in the chloroplast thylakoid membrane. It catalyses the reaction a plastoquinone + NADH + (n+1) H(+)(in) = a plastoquinol + NAD(+) + n H(+)(out). It carries out the reaction a plastoquinone + NADPH + (n+1) H(+)(in) = a plastoquinol + NADP(+) + n H(+)(out). Functionally, NDH shuttles electrons from NAD(P)H:plastoquinone, via FMN and iron-sulfur (Fe-S) centers, to quinones in the photosynthetic chain and possibly in a chloroplast respiratory chain. The immediate electron acceptor for the enzyme in this species is believed to be plastoquinone. Couples the redox reaction to proton translocation, and thus conserves the redox energy in a proton gradient. This Oryza nivara (Indian wild rice) protein is NAD(P)H-quinone oxidoreductase subunit J, chloroplastic.